Here is a 574-residue protein sequence, read N- to C-terminus: MKETIQGTGSWGPEPPGPGIPPAYSSPRRERLRWPPPPKPRLKSGGGFGPDPGSGTTVPARRLPVPRPSFDASASEEEEEEEEEEDEDEEEEVAAWRLPPRWSQLGTSQRPRPSRPTHRKTCSQRRRRAMRAFRMLLYSKSTSLTFHWKLWGRHRGRRRGLAHPKNHLSPQQGGATPQVPSPCCRFDSPRGPPPPRLGLLGALMAEDGVRGSPPVPSGPPMEEDGLRWTPKSPLDPDSGLLSCTLPNGFGGQSGPEGERSLAPPDASILISNVCSIGDHVAQELFQGSDLGMAEEAERPGEKAGQHSPLREEHVTCVQSILDEFLQTYGSLIPLSTDEVVEKLEDIFQQEFSTPSRKGLVLQLIQSYQRMPGNAMVRGFRVAYKRHVLTMDDLGTLYGQNWLNDQVMNMYGDLVMDTVPEKVHFFNSFFYDKLRTKGYDGVKRWTKNVDIFNKELLLIPIHLEVHWSLISVDVRRRTITYFDSQRTLNRRCPKHIAKYLQAEAVKKDRLDFHQGWKGYFKMNVARQNNDSDCGAFVLQYCKHLALSQPFSFTQQDMPKLRRQIYKELCHCKLTV.

Positions 1-125 (MKETIQGTGS…PTHRKTCSQR (125 aa)) are disordered. Phosphoserine is present on residues S54, S73, and S75. Positions 74–93 (ASEEEEEEEEEEDEDEEEEV) are enriched in acidic residues. A compositionally biased stretch (basic residues) spans 112–125 (RPSRPTHRKTCSQR). 2 short sequence motifs (nuclear localization signal) span residues 125 to 128 (RRRR) and 153 to 159 (RHRGRRR). The interval 161–181 (LAHPKNHLSPQQGGATPQVPS) is disordered. Residue S169 is modified to Phosphoserine. T176 is modified (phosphothreonine). A phosphoserine mark is found at S181, S188, S212, and S232. Positions 386–543 (HVLTMDDLGT…AFVLQYCKHL (158 aa)) are protease. Catalysis depends on residues H465 and D482. The Nucleophile role is filled by C532.

It belongs to the peptidase C48 family. In terms of assembly, component of some MLL1/MLL complex, at least composed of the core components KMT2A/MLL1, ASH2L, HCFC1/HCF1, WDR5 and RBBP5, as well as the facultative components BACC1, CHD8, E2F6, HSP70, INO80C, KANSL1, LAS1L, MAX, MCRS1, MGA, MYST1/MOF, PELP1, PHF20, PRP31, RING2, RUVB1/TIP49A, RUVB2/TIP49B, SENP3, TAF1, TAF4, TAF6, TAF7, TAF9 and TEX10. Interacts with EP300, NPM1 and CDCA8. Component of the 5FMC complex, at least composed of PELP1, LAS1L, TEX10, WDR18 and SENP3; the complex interacts with methylated CHTOP and ZNF148. Interacts with NOL9. Interacts with CCAR2.

Its subcellular location is the nucleus. The protein resides in the nucleolus. The protein localises to the nucleoplasm. It is found in the cytoplasm. Its activity is regulated as follows. On oxidative stress, SENP3 degradation is blocked by inhibition of its ubiquitination, which stabilizes it as it accumulates in the nucleoplasm. Protease that releases SUMO2 and SUMO3 monomers from sumoylated substrates, but has only weak activity against SUMO1 conjugates. Deconjugates SUMO2 from MEF2D, which increases its transcriptional activation capability. Deconjugates SUMO2 and SUMO3 from CDCA8. Redox sensor that, when redistributed into nucleoplasm, can act as an effector to enhance HIF1A transcriptional activity by desumoylating EP300. Required for rRNA processing through deconjugation of SUMO2 and SUMO3 from nucleophosmin, NPM1. Plays a role in the regulation of sumoylation status of ZNF148. Functions as a component of the Five Friends of Methylated CHTOP (5FMC) complex; the 5FMC complex is recruited to ZNF148 by methylated CHTOP, leading to desumoylation of ZNF148 and subsequent transactivation of ZNF148 target genes. Deconjugates SUMO2 from KAT5. Catalyzes desumoylation of MRE11. The protein is Sentrin-specific protease 3 of Homo sapiens (Human).